The primary structure comprises 251 residues: Adenosylcobinamide-GDP ribazoletransferase (251 aa).

Helical transmembrane passes span 36–56 (LYPF…FVLS), 60–80 (VPIM…TGFL), 110–130 (VGAF…AGMF), 141–161 (VLIF…VSQE), 181–201 (EIIL…TLGI), 202–222 (NYLI…LKVK), and 231–251 (DVAG…LGII).

This sequence belongs to the CobS family. Mg(2+) is required as a cofactor.

It localises to the cell membrane. The catalysed reaction is alpha-ribazole + adenosylcob(III)inamide-GDP = adenosylcob(III)alamin + GMP + H(+). The enzyme catalyses alpha-ribazole 5'-phosphate + adenosylcob(III)inamide-GDP = adenosylcob(III)alamin 5'-phosphate + GMP + H(+). The protein operates within cofactor biosynthesis; adenosylcobalamin biosynthesis; adenosylcobalamin from cob(II)yrinate a,c-diamide: step 7/7. Its function is as follows. Joins adenosylcobinamide-GDP and alpha-ribazole to generate adenosylcobalamin (Ado-cobalamin). Also synthesizes adenosylcobalamin 5'-phosphate from adenosylcobinamide-GDP and alpha-ribazole 5'-phosphate. The protein is Adenosylcobinamide-GDP ribazoletransferase of Clostridium perfringens (strain 13 / Type A).